A 398-amino-acid chain; its full sequence is tRNA-specific 2-thiouridylase MnmA (398 aa).

ATP contacts are provided by residues 33 to 40 (GMSGGVDS) and Met-59. Positions 119 to 121 (NPD) are interaction with target base in tRNA. Cys-124 (nucleophile) is an active-site residue. Cys-124 and Cys-226 form a disulfide bridge. Gly-148 is a binding site for ATP. An interaction with tRNA region spans residues 176–178 (KDQ). Cys-226 functions as the Cysteine persulfide intermediate in the catalytic mechanism. The interval 343-344 (RY) is interaction with tRNA.

The protein belongs to the MnmA/TRMU family.

The protein resides in the cytoplasm. It carries out the reaction S-sulfanyl-L-cysteinyl-[protein] + uridine(34) in tRNA + AH2 + ATP = 2-thiouridine(34) in tRNA + L-cysteinyl-[protein] + A + AMP + diphosphate + H(+). Functionally, catalyzes the 2-thiolation of uridine at the wobble position (U34) of tRNA, leading to the formation of s(2)U34. The protein is tRNA-specific 2-thiouridylase MnmA of Psychrobacter sp. (strain PRwf-1).